Reading from the N-terminus, the 273-residue chain is 4-hydroxy-tetrahydrodipicolinate reductase (273 aa).

NAD(+)-binding positions include 12 to 17 (GAGGRM) and Glu-38. Residue Arg-39 participates in NADP(+) binding. Residues 102 to 104 (GTT) and 126 to 129 (AANF) each bind NAD(+). His-159 (proton donor/acceptor) is an active-site residue. His-160 is a binding site for (S)-2,3,4,5-tetrahydrodipicolinate. The active-site Proton donor is Lys-163. 169–170 (GT) is a binding site for (S)-2,3,4,5-tetrahydrodipicolinate.

This sequence belongs to the DapB family. In terms of assembly, homotetramer.

The protein localises to the cytoplasm. The catalysed reaction is (S)-2,3,4,5-tetrahydrodipicolinate + NAD(+) + H2O = (2S,4S)-4-hydroxy-2,3,4,5-tetrahydrodipicolinate + NADH + H(+). It carries out the reaction (S)-2,3,4,5-tetrahydrodipicolinate + NADP(+) + H2O = (2S,4S)-4-hydroxy-2,3,4,5-tetrahydrodipicolinate + NADPH + H(+). Its pathway is amino-acid biosynthesis; L-lysine biosynthesis via DAP pathway; (S)-tetrahydrodipicolinate from L-aspartate: step 4/4. Catalyzes the conversion of 4-hydroxy-tetrahydrodipicolinate (HTPA) to tetrahydrodipicolinate. In Escherichia coli (strain K12 / MC4100 / BW2952), this protein is 4-hydroxy-tetrahydrodipicolinate reductase.